The following is a 593-amino-acid chain: Uncoordinated protein 58 (593 aa).

The next 6 helical transmembrane spans lie at 186 to 206, 291 to 311, 320 to 340, 402 to 422, 430 to 450, and 455 to 475; these read VILV…LMLL, TFPT…YGEV, VFSV…AADI, PIGA…AMFI, FIHA…GDIV, and IFLS…TMCV.

Belongs to the two pore domain potassium channel (TC 1.A.1.8) family.

The protein localises to the membrane. Functionally, has a role in mobility, possibly in the transport of potassium in muscles. This chain is Uncoordinated protein 58, found in Caenorhabditis briggsae.